Consider the following 324-residue polypeptide: Serine/threonine-protein phosphatase PP1 isozyme 8 (324 aa).

Mn(2+) is bound by residues Asp-66, His-68, Asp-94, and Asn-126. His-127 serves as the catalytic Proton donor. Mn(2+) contacts are provided by His-175 and His-250.

It belongs to the PPP phosphatase family. PP-1 subfamily. Mn(2+) is required as a cofactor. As to expression, expressed in roots, rosettes and flowers.

Its subcellular location is the nucleus. It localises to the cytoplasm. It carries out the reaction O-phospho-L-seryl-[protein] + H2O = L-seryl-[protein] + phosphate. It catalyses the reaction O-phospho-L-threonyl-[protein] + H2O = L-threonyl-[protein] + phosphate. Phosphatase activity is strongly reduced by the protein phosphatase inhibitor 2 (I-2). Serine/threonine-protein phosphatase that possesses phosphatase activity toward para-nitrophenyl phosphate (pNPP) in vitro. This chain is Serine/threonine-protein phosphatase PP1 isozyme 8, found in Arabidopsis thaliana (Mouse-ear cress).